Consider the following 353-residue polypeptide: Palmitoyltransferase SWF1 (353 aa).

Position 1 (Met1) is a topological domain, lumenal. Residues 2 to 22 (LFTLIVCLTIISSLATFLLLF) form a helical membrane-spanning segment. Topologically, residues 23–61 (GDSPSFRNTPIQKLRNSLLSISRDIFQFYHWLDEKLNGQ) are cytoplasmic. A helical membrane pass occupies residues 62-82 (LLKILNWLVPVGYVMVVTVCF). Residues 83-100 (QQFLTHTLPMLSSPGLFR) lie on the Lumenal side of the membrane. Residues 101–121 (LFTIYFSMVLIYASTILAAFS) traverse the membrane as a helical segment. The Cytoplasmic portion of the chain corresponds to 122 to 190 (DPGRITTINL…NNCVGYYNYK (69 aa)). A DHHC domain is found at 147–197 (KTCSTCHIAKPARSKHCSVCNQCFLLYDHHCVWINNCVGYYNYKWFMLFLI). Cys177 serves as the catalytic S-palmitoyl cysteine intermediate. The helical transmembrane segment at 191 to 211 (WFMLFLISNINMLGYGGWLCY) threads the bilayer. At 212-233 (WALTPVSWRKITSTNNANKVTG) the chain is on the lumenal side. Residues 234–254 (IFLILCSIFIVITTLFTFLHL) form a helical membrane-spanning segment. Residues 255 to 353 (RYIYLGVTTN…WNNLIERLKW (99 aa)) are Cytoplasmic-facing.

The protein belongs to the DHHC palmitoyltransferase family. SWF1 subfamily.

The protein localises to the endoplasmic reticulum membrane. It carries out the reaction L-cysteinyl-[protein] + hexadecanoyl-CoA = S-hexadecanoyl-L-cysteinyl-[protein] + CoA. Palmitoyltransferase that targets several endosomal SNAREs. Palmitoylates the SNAREs at cysteine residues close to the cytoplasmic end of their transmembrane domain. May have a role in the cellular quality control of transmembrane domain-containing proteins. The sequence is that of Palmitoyltransferase SWF1 (SWF1) from Candida albicans (strain SC5314 / ATCC MYA-2876) (Yeast).